The chain runs to 159 residues: SsrA-binding protein (159 aa).

It belongs to the SmpB family.

The protein resides in the cytoplasm. In terms of biological role, required for rescue of stalled ribosomes mediated by trans-translation. Binds to transfer-messenger RNA (tmRNA), required for stable association of tmRNA with ribosomes. tmRNA and SmpB together mimic tRNA shape, replacing the anticodon stem-loop with SmpB. tmRNA is encoded by the ssrA gene; the 2 termini fold to resemble tRNA(Ala) and it encodes a 'tag peptide', a short internal open reading frame. During trans-translation Ala-aminoacylated tmRNA acts like a tRNA, entering the A-site of stalled ribosomes, displacing the stalled mRNA. The ribosome then switches to translate the ORF on the tmRNA; the nascent peptide is terminated with the 'tag peptide' encoded by the tmRNA and targeted for degradation. The ribosome is freed to recommence translation, which seems to be the essential function of trans-translation. This is SsrA-binding protein from Coxiella burnetii (strain RSA 331 / Henzerling II).